Consider the following 162-residue polypeptide: 18.5 kDa class IV heat shock protein (162 aa).

Positions 53 to 149 (TSSSTVNTQL…PPQLPEIEEN (97 aa)) constitute a sHSP domain.

It belongs to the small heat shock protein (HSP20) family. May form oligomeric structures.

The protein resides in the cytoplasm. The chain is 18.5 kDa class IV heat shock protein (HSP18.5) from Arabidopsis thaliana (Mouse-ear cress).